The chain runs to 340 residues: MTAPLVVLGNPLLDFQADVTAEYLAKYSLKENDAILVDAKSGDAKMAIFDELLQMPETKLVAGGAAQNTARGAAYVLGAGQVVYFGSVGKDKFSERLLNENEKAGVKSMYQVQNDIGTGKCAALITGHNRSLVTDLGAANFFTPDHLDKHWDLVEAAKLFYIGGFHLTVSPDAIVKLGQHAKENSKPFVLNFSAPFIPHVFKDALARVLPYATVIIANESEAEAFCDAFQLDCANTDLEAIAQRIVKDSPVEKTVIFTHGVEPTVVVSSKGTSTYPVKPLDSSKIVDTNGAGDAFAGGFMAGLTKGEDLETSIDMGQWLAALSIQEVGPSYPSEKISYSK.

The active site involves D293.

The protein belongs to the carbohydrate kinase PfkB family. The cofactor is Mg(2+).

It carries out the reaction adenosine + ATP = AMP + ADP + H(+). It functions in the pathway purine metabolism; AMP biosynthesis via salvage pathway; AMP from adenosine: step 1/1. Functionally, ATP dependent phosphorylation of adenosine and other related nucleoside analogs to monophosphate derivatives. ADO1 does not play a major role in adenine utilization in yeast. Its physiological role could primarily be to recycle adenosine produced by the methyl cycle. The chain is Adenosine kinase from Saccharomyces cerevisiae (strain ATCC 204508 / S288c) (Baker's yeast).